Consider the following 475-residue polypeptide: Protein transport protein Sec61 subunit alpha (475 aa).

Over 1–32 (MGFRFLDIVKPFTSLVPEVGQPDRKIPFREKV) the chain is Cytoplasmic. The chain crosses the membrane as a helical span at residues 33 to 53 (LWTAICLFIFLVCSQIPLYGI). Residues 54-75 (RSTDSSDPFYWAKVIMASNRGT) are Lumenal-facing. A helical membrane pass occupies residues 76-96 (LMELGISPIVTSGMVMQLLAG). Residues 97–118 (AKLIEIDQSVKADRDLFSAAQK) lie on the Cytoplasmic side of the membrane. The chain crosses the membrane as a helical span at residues 119 to 139 (LFGMLICVGQGVAYIWSGSYG). Residues 140-145 (DPAVLG) lie on the Lumenal side of the membrane. Residues 146–166 (FGNCFLIVLQLFFAGIIVMLL) form a helical membrane-spanning segment. The Cytoplasmic segment spans residues 167-173 (DELLQKG). The helical transmembrane segment at 174–194 (YGIGSGISLFIATNICETIVW) threads the bilayer. The Lumenal segment spans residues 195–241 (KTFSPTTVSVGKGTEFEGAVIALFHLLLTRNDKVRALKEAFYRQNLP). Residues 242–262 (NITNLLATVLIFMVVIYFQGF) traverse the membrane as a helical segment. The Cytoplasmic portion of the chain corresponds to 263–289 (RVDLPVKSTRVSGQQGTYPIKLFYTSN). Residues 290-310 (IPIILQSALVSNLYFISQLLY) form a helical membrane-spanning segment. Topologically, residues 311–353 (RRFPDNILVNLFGAWRTSEYSQQMIPVSGLTYYISSPNNMSAV) are lumenal. Residues 354 to 374 (LADPFHALFYITFMLTSCALF) form a helical membrane-spanning segment. Over 375 to 411 (SKVWIEVSGSSARDVAKQLKDQQMTMKGHRDTSVIKE) the chain is Cytoplasmic. Residues 412–434 (LNRYIPTAAAFGGLCIGALTVVA) form a helical membrane-spanning segment. The Lumenal portion of the chain corresponds to 435–440 (DFMGAI). A helical membrane pass occupies residues 441–461 (GSGTGILLAVTIIYQYFETFV). Residues 462–475 (KEQQELSGGIGGLF) lie on the Cytoplasmic side of the membrane.

The protein belongs to the SecY/SEC61-alpha family. As to quaternary structure, heterotrimeric complex composed of SEC61-alpha, SEC61-beta and SEC61-gamma.

Its subcellular location is the endoplasmic reticulum membrane. Appears to play a crucial role in the insertion of secretory and membrane polypeptides into the ER. It is required for assembly of membrane and secretory proteins. Found to be tightly associated with membrane-bound ribosomes, either directly or through adaptor proteins. The chain is Protein transport protein Sec61 subunit alpha (sec61a) from Dictyostelium discoideum (Social amoeba).